The primary structure comprises 76 residues: Serine proteinase inhibitor IA-2 (76 aa).

Ser-1 is modified (N-acetylserine).

This sequence belongs to the protease inhibitor I9 family.

In terms of biological role, specifically inhibits an intracellular serine proteinase (proteinase A). The chain is Serine proteinase inhibitor IA-2 from Pleurotus ostreatus (Oyster mushroom).